A 341-amino-acid polypeptide reads, in one-letter code: Hygromycin-B 4-O-kinase (341 aa).

Residue D198 is the Proton acceptor of the active site.

This sequence belongs to the aminoglycoside phosphotransferase family.

It carries out the reaction hygromycin B + ATP = 4-O-phosphohygromycin B + ADP + H(+). Its function is as follows. The aminoglycoside phosphotransferases achieve inactivation of their antibiotic substrates by phosphorylation. Only phosphorylates hygromycin and closely related compounds such as demethyl analogs and destomycin. The chain is Hygromycin-B 4-O-kinase (hph) from Escherichia coli.